Here is a 333-residue protein sequence, read N- to C-terminus: Mycothiol acetyltransferase (333 aa).

N-acetyltransferase domains follow at residues 18–170 and 176–333; these read PTLS…LPEP and VTVR…AAAD. Glutamate 46 lines the 1D-myo-inositol 2-(L-cysteinylamino)-2-deoxy-alpha-D-glucopyranoside pocket. 98–100 serves as a coordination point for acetyl-CoA; that stretch reads IVV. Glutamate 203, lysine 242, and glutamate 261 together coordinate 1D-myo-inositol 2-(L-cysteinylamino)-2-deoxy-alpha-D-glucopyranoside. Residues 265-267 and 272-278 each bind acetyl-CoA; these read VGV and GGAGLGR. Tyrosine 299 is a binding site for 1D-myo-inositol 2-(L-cysteinylamino)-2-deoxy-alpha-D-glucopyranoside. Acetyl-CoA is bound at residue 304 to 309; the sequence is NERAVR.

This sequence belongs to the acetyltransferase family. MshD subfamily. As to quaternary structure, monomer.

The enzyme catalyses 1D-myo-inositol 2-(L-cysteinylamino)-2-deoxy-alpha-D-glucopyranoside + acetyl-CoA = mycothiol + CoA + H(+). Catalyzes the transfer of acetyl from acetyl-CoA to desacetylmycothiol (Cys-GlcN-Ins) to form mycothiol. In Frankia alni (strain DSM 45986 / CECT 9034 / ACN14a), this protein is Mycothiol acetyltransferase.